Here is a 287-residue protein sequence, read N- to C-terminus: MSPPTEGRAPGSRPIAGFAPAKINLTLHVTGQRGDGYHLLDSLVVFADIGDRLVLDPDAALGLTVSGPRAAGVPTGPENLILKAAAHLGAVRGAIHLEKHLPAAAGIGGGSSDAATALRLHAQAMGRALPDDGAALGADVPVCLRGKATRMSGIGEALTPVAGLPPLPAVLVNPGVDVPTPAVFRGLRQKENPPMPADLPGFATPTDCARWLATQRNDLEPPARAAAPVIDSVLAEIAGDPDCLLARMSGSGATCFGLFETPAQAQAAAETLSTRHPDWWVAPTVLR.

The active site involves Lys-22. 102–112 (PAAAGIGGGSS) provides a ligand contact to ATP. The active site involves Asp-139.

This sequence belongs to the GHMP kinase family. IspE subfamily.

It catalyses the reaction 4-CDP-2-C-methyl-D-erythritol + ATP = 4-CDP-2-C-methyl-D-erythritol 2-phosphate + ADP + H(+). Its pathway is isoprenoid biosynthesis; isopentenyl diphosphate biosynthesis via DXP pathway; isopentenyl diphosphate from 1-deoxy-D-xylulose 5-phosphate: step 3/6. Its function is as follows. Catalyzes the phosphorylation of the position 2 hydroxy group of 4-diphosphocytidyl-2C-methyl-D-erythritol. This is 4-diphosphocytidyl-2-C-methyl-D-erythritol kinase from Dinoroseobacter shibae (strain DSM 16493 / NCIMB 14021 / DFL 12).